The chain runs to 370 residues: 2-aminoethylphosphonate--pyruvate transaminase (370 aa).

At lysine 194 the chain carries N6-(pyridoxal phosphate)lysine.

Belongs to the class-V pyridoxal-phosphate-dependent aminotransferase family. PhnW subfamily. As to quaternary structure, homodimer. Pyridoxal 5'-phosphate is required as a cofactor.

The catalysed reaction is (2-aminoethyl)phosphonate + pyruvate = phosphonoacetaldehyde + L-alanine. Functionally, involved in phosphonate degradation. The sequence is that of 2-aminoethylphosphonate--pyruvate transaminase from Paraburkholderia phymatum (strain DSM 17167 / CIP 108236 / LMG 21445 / STM815) (Burkholderia phymatum).